Consider the following 519-residue polypeptide: 2-isopropylmalate synthase (519 aa).

The Pyruvate carboxyltransferase domain maps to 5-267; that stretch reads VIIFDTTLRD…QTRINHKEIY (263 aa). Residues aspartate 14, histidine 202, histidine 204, and asparagine 238 each coordinate Mn(2+). The interval 392-519 is regulatory domain; the sequence is VMNYFNTQSG…RKHHTTQEAV (128 aa).

The protein belongs to the alpha-IPM synthase/homocitrate synthase family. LeuA type 1 subfamily. In terms of assembly, homodimer. The cofactor is Mn(2+).

The protein localises to the cytoplasm. It catalyses the reaction 3-methyl-2-oxobutanoate + acetyl-CoA + H2O = (2S)-2-isopropylmalate + CoA + H(+). The protein operates within amino-acid biosynthesis; L-leucine biosynthesis; L-leucine from 3-methyl-2-oxobutanoate: step 1/4. Functionally, catalyzes the condensation of the acetyl group of acetyl-CoA with 3-methyl-2-oxobutanoate (2-ketoisovalerate) to form 3-carboxy-3-hydroxy-4-methylpentanoate (2-isopropylmalate). The polypeptide is 2-isopropylmalate synthase (Proteus mirabilis (strain HI4320)).